We begin with the raw amino-acid sequence, 675 residues long: Methionine--tRNA ligase (675 aa).

The 'HIGH' region signature appears at 15-25; that stretch reads PYANGSIHLGH. Residues cysteine 146, cysteine 149, cysteine 159, and cysteine 162 each coordinate Zn(2+). A 'KMSKS' region motif is present at residues 332-336; the sequence is KMSKS. Residue lysine 335 coordinates ATP. Residues 573-675 enclose the tRNA-binding domain; that stretch reads DFAKVDMRIA…SGAQPGMQVK (103 aa).

This sequence belongs to the class-I aminoacyl-tRNA synthetase family. MetG type 1 subfamily. As to quaternary structure, homodimer. Zn(2+) serves as cofactor.

It localises to the cytoplasm. The catalysed reaction is tRNA(Met) + L-methionine + ATP = L-methionyl-tRNA(Met) + AMP + diphosphate. Its function is as follows. Is required not only for elongation of protein synthesis but also for the initiation of all mRNA translation through initiator tRNA(fMet) aminoacylation. This Yersinia pseudotuberculosis serotype I (strain IP32953) protein is Methionine--tRNA ligase.